The sequence spans 83 residues: RNA-binding protein Hfq (83 aa).

Residues 9 to 69 (DYFLNQLRKD…ISTFAPARNV (61 aa)) form the Sm domain.

Belongs to the Hfq family. Homohexamer.

In terms of biological role, RNA chaperone that binds small regulatory RNA (sRNAs) and mRNAs to facilitate mRNA translational regulation in response to envelope stress, environmental stress and changes in metabolite concentrations. Also binds with high specificity to tRNAs. The chain is RNA-binding protein Hfq from Exiguobacterium sibiricum (strain DSM 17290 / CCUG 55495 / CIP 109462 / JCM 13490 / 255-15).